We begin with the raw amino-acid sequence, 124 residues long: Large ribosomal subunit protein bL12 (124 aa).

Belongs to the bacterial ribosomal protein bL12 family. In terms of assembly, homodimer. Part of the ribosomal stalk of the 50S ribosomal subunit. Forms a multimeric L10(L12)X complex, where L10 forms an elongated spine to which 2 to 4 L12 dimers bind in a sequential fashion. Binds GTP-bound translation factors.

Functionally, forms part of the ribosomal stalk which helps the ribosome interact with GTP-bound translation factors. Is thus essential for accurate translation. The chain is Large ribosomal subunit protein bL12 from Idiomarina loihiensis (strain ATCC BAA-735 / DSM 15497 / L2-TR).